The following is a 776-amino-acid chain: Transferrin receptor protein 1 (776 aa).

The Cytoplasmic segment spans residues 1-70; that stretch reads MDHARAALSN…QPQRNGKRLC (70 aa). Residues 19–22 carry the Endocytosis signal motif; sequence YTRF. At S23 the chain carries Phosphoserine. C70 carries the S-palmitoyl cysteine lipid modification. The helical; Signal-anchor for type II membrane protein transmembrane segment at 71–91 threads the bilayer; that stretch reads FLVIAAVLLLLIGFLIGYLSY. Residues 92-776 are Extracellular-facing; the sequence is RGRIELAARC…GDIWETDNEF (685 aa). Residues 230 to 322 enclose the PA domain; that stretch reads SESGSVSGKP…GTGDPYTPGF (93 aa). N-linked (GlcNAc...) asparagine glycosylation is found at N261, N326, and N391. A ligand-binding region spans residues 586–776; the sequence is KGDTLENLRK…GDIWETDNEF (191 aa). A Cell attachment site motif is present at residues 662–664; that stretch reads RGD. N738 carries N-linked (GlcNAc...) asparagine glycosylation.

It belongs to the peptidase M28 family. M28B subfamily. As to quaternary structure, homodimer; disulfide-linked. Binds one transferrin molecule per subunit. Stearoylated. Stearoylation does not affect iron uptake. Post-translationally, N- and O-glycosylated, phosphorylated and palmitoylated.

It localises to the cell membrane. The protein localises to the melanosome. Functionally, cellular uptake of iron occurs via receptor-mediated endocytosis of ligand-occupied transferrin receptor into specialized endosomes. Endosomal acidification leads to iron release. The apotransferrin-receptor complex is then recycled to the cell surface with a return to neutral pH and the concomitant loss of affinity of apotransferrin for its receptor. Transferrin receptor is necessary for development of erythrocytes and the nervous system. Acts as a lipid sensor that regulates mitochondrial fusion by regulating activation of the JNK pathway. When dietary levels of stearate (C18:0) are low, promotes activation of the JNK pathway, resulting in HUWE1-mediated ubiquitination and subsequent degradation of the mitofusin MFN2 and inhibition of mitochondrial fusion. When dietary levels of stearate (C18:0) are high, TFRC stearoylation inhibits activation of the JNK pathway and thus degradation of the mitofusin MFN2. Mediates uptake of NICOL1 into fibroblasts where it may regulate extracellular matrix production. The sequence is that of Transferrin receptor protein 1 (TFRC) from Gallus gallus (Chicken).